The chain runs to 275 residues: Small ribosomal subunit protein uS2 (275 aa).

Residues 226–275 (AAAPNSASVREEEFSAEAGDEGKGRRAPAKKATEKKADAPAAAPEAPAAE) form a disordered region. The span at 264–275 (APAAAPEAPAAE) shows a compositional bias: low complexity.

The protein belongs to the universal ribosomal protein uS2 family.

The protein is Small ribosomal subunit protein uS2 of Xanthomonas campestris pv. campestris (strain ATCC 33913 / DSM 3586 / NCPPB 528 / LMG 568 / P 25).